A 186-amino-acid chain; its full sequence is Small ribosomal subunit protein uS5 (186 aa).

The S5 DRBM domain occupies 20–83 (FVDKLVHINR…EAAKRDMIFV (64 aa)).

Belongs to the universal ribosomal protein uS5 family. As to quaternary structure, part of the 30S ribosomal subunit. Contacts proteins S4 and S8.

In terms of biological role, with S4 and S12 plays an important role in translational accuracy. Located at the back of the 30S subunit body where it stabilizes the conformation of the head with respect to the body. This chain is Small ribosomal subunit protein uS5, found in Brucella ovis (strain ATCC 25840 / 63/290 / NCTC 10512).